We begin with the raw amino-acid sequence, 336 residues long: tRNA N6-adenosine threonylcarbamoyltransferase (336 aa).

Fe cation contacts are provided by H114 and H118. Substrate-binding positions include 136–140, D169, G182, D186, and N275; that span reads LVSGG. D301 contributes to the Fe cation binding site.

The protein belongs to the KAE1 / TsaD family. The cofactor is Fe(2+).

It localises to the cytoplasm. It carries out the reaction L-threonylcarbamoyladenylate + adenosine(37) in tRNA = N(6)-L-threonylcarbamoyladenosine(37) in tRNA + AMP + H(+). Its function is as follows. Required for the formation of a threonylcarbamoyl group on adenosine at position 37 (t(6)A37) in tRNAs that read codons beginning with adenine. Is involved in the transfer of the threonylcarbamoyl moiety of threonylcarbamoyl-AMP (TC-AMP) to the N6 group of A37, together with TsaE and TsaB. TsaD likely plays a direct catalytic role in this reaction. The chain is tRNA N6-adenosine threonylcarbamoyltransferase from Streptococcus pneumoniae (strain ATCC 700669 / Spain 23F-1).